A 143-amino-acid polypeptide reads, in one-letter code: Deoxyuridine 5'-triphosphate nucleotidohydrolase (143 aa).

Residues 62 to 64 (RSG), N75, and 79 to 81 (TID) contribute to the substrate site.

It belongs to the dUTPase family. Requires Mg(2+) as cofactor.

It carries out the reaction dUTP + H2O = dUMP + diphosphate + H(+). The protein operates within pyrimidine metabolism; dUMP biosynthesis; dUMP from dCTP (dUTP route): step 2/2. Functionally, this enzyme is involved in nucleotide metabolism: it produces dUMP, the immediate precursor of thymidine nucleotides and it decreases the intracellular concentration of dUTP so that uracil cannot be incorporated into DNA. The sequence is that of Deoxyuridine 5'-triphosphate nucleotidohydrolase from Acaryochloris marina (strain MBIC 11017).